Reading from the N-terminus, the 182-residue chain is Large ribosomal subunit protein uL6 (182 aa).

Belongs to the universal ribosomal protein uL6 family. In terms of assembly, part of the 50S ribosomal subunit.

Its function is as follows. This protein binds to the 23S rRNA, and is important in its secondary structure. It is located near the subunit interface in the base of the L7/L12 stalk, and near the tRNA binding site of the peptidyltransferase center. The sequence is that of Large ribosomal subunit protein uL6 from Methanococcus maripaludis (strain C6 / ATCC BAA-1332).